We begin with the raw amino-acid sequence, 333 residues long: 1,5-anhydro-D-fructose reductase (333 aa).

Residues 9 to 12 (ASTI), 33 to 34 (SS), Arg38, 71 to 76 (TTNELH), 93 to 94 (EK), Asn120, 162 to 163 (WR), and Tyr283 each bind NADP(+).

Belongs to the Gfo/Idh/MocA family. In terms of assembly, monomer.

The enzyme catalyses 1,5-anhydro-D-mannitol + NADP(+) = 1,5-anhydro-D-fructose + NADPH + H(+). In terms of biological role, catalyzes the NADPH-specific reduction of 1,5-anhydro-D-fructose to 1,5-anhydro-D-mannitol. The protein is 1,5-anhydro-D-fructose reductase (afr) of Rhizobium meliloti (strain 1021) (Ensifer meliloti).